The chain runs to 613 residues: Serine protease FAM111A (613 aa).

A disordered region spans residues 1 to 72 (MSCKKRKSQI…TRQDQTPPLN (72 aa)). Lys-19 participates in a covalent cross-link: Glycyl lysine isopeptide (Lys-Gly) (interchain with G-Cter in SUMO2). At Ser-25 the chain carries Phosphoserine. Residue Lys-29 forms a Glycyl lysine isopeptide (Lys-Gly) (interchain with G-Cter in SUMO2) linkage. The span at 40 to 56 (VDSKKMPRDITNTRDQR) shows a compositional bias: basic and acidic residues. Lys-62 participates in a covalent cross-link: Glycyl lysine isopeptide (Lys-Gly) (interchain with G-Cter in SUMO2). Catalysis depends on charge relay system residues His-383, Asp-437, and Ser-543.

The protein belongs to the FAM111 family. Interacts (via PIP-box) with PCNA; this interaction is direct. In terms of processing, autocatalytically cleaved; autocatalytic cleavage takes place in trans.

It localises to the nucleus. The protein localises to the chromosome. Its subcellular location is the cytoplasm. In terms of biological role, single-stranded DNA-binding serine protease that mediates the proteolytic cleavage of covalent DNA-protein cross-links (DPCs) during DNA synthesis, thereby playing a key role in maintaining genomic integrity. DPCs are highly toxic DNA lesions that interfere with essential chromatin transactions, such as replication and transcription, and which are induced by reactive agents, such as UV light or formaldehyde. Protects replication fork from stalling by removing DPCs, such as covalently trapped topoisomerase 1 (TOP1) adducts on DNA lesion, or poly(ADP-ribose) polymerase 1 (PARP1)-DNA complexes trapped by PARP inhibitors. Required for PCNA loading on replication sites. Promotes S-phase entry and DNA synthesis. The chain is Serine protease FAM111A from Mus musculus (Mouse).